Reading from the N-terminus, the 329-residue chain is GTPase Obg (329 aa).

Residues 1–159 (MQFIDQARIS…WPLQLELKLL (159 aa)) enclose the Obg domain. The region spanning 160-328 (AEVGIIGLPN…MLDRVWSELG (169 aa)) is the OBG-type G domain. Residues 166 to 173 (GLPNAGKS), 191 to 195 (FTTLI), 213 to 216 (DIPG), 280 to 283 (NKQE), and 309 to 311 (SAA) each bind ATP. Serine 173 and threonine 193 together coordinate Mg(2+).

Belongs to the TRAFAC class OBG-HflX-like GTPase superfamily. OBG GTPase family. Monomer. Mg(2+) is required as a cofactor.

It localises to the cytoplasm. Functionally, an essential GTPase which binds GTP, GDP and possibly (p)ppGpp with moderate affinity, with high nucleotide exchange rates and a fairly low GTP hydrolysis rate. Plays a role in control of the cell cycle, stress response, ribosome biogenesis and in those bacteria that undergo differentiation, in morphogenesis control. This chain is GTPase Obg, found in Synechococcus sp. (strain CC9311).